A 37-amino-acid chain; its full sequence is Large ribosomal subunit protein bL36A (37 aa).

Belongs to the bacterial ribosomal protein bL36 family.

In Arthrobacter sp. (strain FB24), this protein is Large ribosomal subunit protein bL36A.